Here is a 397-residue protein sequence, read N- to C-terminus: MDDSKRILITKILKNEVTEALGCTEVGLIGYAVSLCNISDPFSIEKIELTLNNGSFKNVYAVGVPNTGKYGLLPAVVGGFLGNSKNKLLIFNDITYSQELEDFTKEKLEIKVINGPLYCSVKIKDNSGKIHESLIKDNHLNVVIPEIKKEKINMEINSSEKEKYKNLELLDFLNYLDEIPEEIIKLVEKTIYTNKNLIKGDFLNYGTDILSNMVNKTTSACNIRMTGENMTAMSVAKSGNMGIMATLPIISYDFSTENNSEKLIKSVLLSMLVTIYSTYNSSYLSSMCGCVSKGGMGAVIGLSHYKNGKNLKKFDSSARTFTANLPGIICDGGKVGCALKLASGCFAAYSSLFVDISYENGIVGKNFKECVENISKISKAMGDLDCDIVEIMSKKEM.

The active-site Proton acceptor is the cysteine 23. 3 residues coordinate [4Fe-4S] cluster: cysteine 288, cysteine 330, and cysteine 337.

This sequence belongs to the L-cysteine desulfidase family. As to quaternary structure, homotrimer. [4Fe-4S] cluster serves as cofactor.

It catalyses the reaction L-cysteine + H2O = hydrogen sulfide + pyruvate + NH4(+) + H(+). Functionally, catalyzes the cleavage of L-cysteine to form 2-aminoprop-2-enoate and sulfide. The former then spontaneously hydrolyzes to pyruvate and NH(3). May be responsible for the production of sulfide required for the biosynthesis of iron-sulfur centers in this archaea. The protein is L-cysteine desulfidase of Methanococcus maripaludis (strain C5 / ATCC BAA-1333).